The primary structure comprises 72 residues: Cytochrome b-c1 complex subunit 8-1, mitochondrial (72 aa).

The Mitochondrial matrix portion of the chain corresponds to 1–41 (MGKQPVKLKAVVYALSPFQQKIMTGLWKDLPEKIHHKVSEN). A helical membrane pass occupies residues 42–58 (WISATLLVTPVVGTYWY). Residues 59-72 (AQYFKEQEKLEHRF) lie on the Mitochondrial intermembrane side of the membrane.

The protein belongs to the UQCRQ/QCR8 family. As to quaternary structure, component of the ubiquinol-cytochrome c oxidoreductase (cytochrome b-c1 complex, complex III, CIII), a multisubunit enzyme composed of 10 subunits. The complex is composed of 3 respiratory subunits cytochrome b (MT-CYB), cytochrome c1 (CYC1-1 or CYC1-2) and Rieske protein (UCR1-1 or UCR1-2), 2 core protein subunits MPPalpha1 (or MPPalpha2) and MPPB, and 5 low-molecular weight protein subunits QCR7-1 (or QCR7-2), UCRQ-1 (or UCRQ-2), QCR9, UCRY and probably QCR6-1 (or QCR6-2). The complex exists as an obligatory dimer and forms supercomplexes (SCs) in the inner mitochondrial membrane with NADH-ubiquinone oxidoreductase (complex I, CI), resulting in different assemblies (supercomplexes SCI(1)III(2) and SCI(2)III(4)).

It localises to the mitochondrion inner membrane. In terms of biological role, component of the ubiquinol-cytochrome c oxidoreductase, a multisubunit transmembrane complex that is part of the mitochondrial electron transport chain which drives oxidative phosphorylation. The respiratory chain contains 3 multisubunit complexes succinate dehydrogenase (complex II, CII), ubiquinol-cytochrome c oxidoreductase (cytochrome b-c1 complex, complex III, CIII) and cytochrome c oxidase (complex IV, CIV), that cooperate to transfer electrons derived from NADH and succinate to molecular oxygen, creating an electrochemical gradient over the inner membrane that drives transmembrane transport and the ATP synthase. The cytochrome b-c1 complex catalyzes electron transfer from ubiquinol to cytochrome c, linking this redox reaction to translocation of protons across the mitochondrial inner membrane, with protons being carried across the membrane as hydrogens on the quinol. In the process called Q cycle, 2 protons are consumed from the matrix, 4 protons are released into the intermembrane space and 2 electrons are passed to cytochrome c. This is Cytochrome b-c1 complex subunit 8-1, mitochondrial (UCRQ-1) from Arabidopsis thaliana (Mouse-ear cress).